A 175-amino-acid polypeptide reads, in one-letter code: MMTYVVFILSIVFVIGLIGSPSKPSPIYGGLGLIVSGGAGCGMVLNFGGSFLGLMVFLVYLGGMLVVFGYTTAMATEQYPEVWVSNKVVLGAFLLGLMMEFLAVLYVLKEGEVELVFKFSGLGDWVVYGMSDFGVFSGEAMGVAALYSYGVWLVVVTGWSLFVGVVVIMEVTRGG.

Transmembrane regions (helical) follow at residues 1-21, 25-45, 47-67, 88-108, 115-137, and 149-169; these read MMTYVVFILSIVFVIGLIGSP, SPIYGGLGLIVSGGAGCGMVL, FGGSFLGLMVFLVYLGGMLVV, VVLGAFLLGLMMEFLAVLYVL, LVFKFSGLGDWVVYGMSDFGVFS, and YGVWLVVVTGWSLFVGVVVIM.

The protein belongs to the complex I subunit 6 family. In terms of assembly, core subunit of respiratory chain NADH dehydrogenase (Complex I) which is composed of 45 different subunits.

It is found in the mitochondrion inner membrane. The catalysed reaction is a ubiquinone + NADH + 5 H(+)(in) = a ubiquinol + NAD(+) + 4 H(+)(out). In terms of biological role, core subunit of the mitochondrial membrane respiratory chain NADH dehydrogenase (Complex I) which catalyzes electron transfer from NADH through the respiratory chain, using ubiquinone as an electron acceptor. Essential for the catalytic activity and assembly of complex I. The sequence is that of NADH-ubiquinone oxidoreductase chain 6 (MT-ND6) from Hippopotamus amphibius (Hippopotamus).